Consider the following 639-residue polypeptide: Extracellular metalloproteinase 9 (639 aa).

A signal peptide spans 1–19 (MHGLLLAAGLLSLPLRALG). Residues 20–250 (HPNPNPQMHT…IHGVVDYVAD (231 aa)) constitute a propeptide that is removed on maturation. Asn-278 is a glycosylation site (N-linked (GlcNAc...) asparagine). The tract at residues 293-312 (PTTRGNNGIAQDNPSGGNQY) is disordered. His-434 contributes to the Zn(2+) binding site. Residue Glu-435 is part of the active site. His-438 contacts Zn(2+).

The protein belongs to the peptidase M36 family. The cofactor is Zn(2+).

It is found in the secreted. Functionally, secreted metalloproteinase that allows assimilation of proteinaceous substrates and probably acts as a virulence factor. This chain is Extracellular metalloproteinase 9 (MEP9), found in Coccidioides posadasii (strain C735) (Valley fever fungus).